The following is a 156-amino-acid chain: ATP synthase subunit b 1 (156 aa).

Residues 7 to 27 form a helical membrane-spanning segment; the sequence is LFLQAIVFAILVWFTMKFVWP.

This sequence belongs to the ATPase B chain family. As to quaternary structure, F-type ATPases have 2 components, F(1) - the catalytic core - and F(0) - the membrane proton channel. F(1) has five subunits: alpha(3), beta(3), gamma(1), delta(1), epsilon(1). F(0) has three main subunits: a(1), b(2) and c(10-14). The alpha and beta chains form an alternating ring which encloses part of the gamma chain. F(1) is attached to F(0) by a central stalk formed by the gamma and epsilon chains, while a peripheral stalk is formed by the delta and b chains.

It is found in the cell inner membrane. F(1)F(0) ATP synthase produces ATP from ADP in the presence of a proton or sodium gradient. F-type ATPases consist of two structural domains, F(1) containing the extramembraneous catalytic core and F(0) containing the membrane proton channel, linked together by a central stalk and a peripheral stalk. During catalysis, ATP synthesis in the catalytic domain of F(1) is coupled via a rotary mechanism of the central stalk subunits to proton translocation. Its function is as follows. Component of the F(0) channel, it forms part of the peripheral stalk, linking F(1) to F(0). The protein is ATP synthase subunit b 1 of Albidiferax ferrireducens (strain ATCC BAA-621 / DSM 15236 / T118) (Rhodoferax ferrireducens).